Reading from the N-terminus, the 214-residue chain is Small ribosomal subunit protein eS1 (214 aa).

It belongs to the eukaryotic ribosomal protein eS1 family.

The polypeptide is Small ribosomal subunit protein eS1 (Aeropyrum pernix (strain ATCC 700893 / DSM 11879 / JCM 9820 / NBRC 100138 / K1)).